A 364-amino-acid chain; its full sequence is D-alanine--D-alanine ligase (364 aa).

Residues 134 to 344 (KVLLKSFNIP…YESLVDKLIT (211 aa)) enclose the ATP-grasp domain. 167–222 (NNKLNYPVIVKPSVLGSSIGINVAYNVSQIEKYIEEAFEYDLTVVVEKFIKAREIE) contacts ATP. Mg(2+) contacts are provided by Asp-297, Glu-311, and Asn-313.

The protein belongs to the D-alanine--D-alanine ligase family. It depends on Mg(2+) as a cofactor. Requires Mn(2+) as cofactor.

The protein localises to the cytoplasm. It catalyses the reaction 2 D-alanine + ATP = D-alanyl-D-alanine + ADP + phosphate + H(+). The protein operates within cell wall biogenesis; peptidoglycan biosynthesis. Cell wall formation. In Borrelia duttonii (strain Ly), this protein is D-alanine--D-alanine ligase.